A 260-amino-acid chain; its full sequence is tRNA pseudouridine synthase A (260 aa).

Aspartate 52 functions as the Nucleophile in the catalytic mechanism. Position 111 (tyrosine 111) interacts with substrate.

Belongs to the tRNA pseudouridine synthase TruA family. Homodimer.

The enzyme catalyses uridine(38/39/40) in tRNA = pseudouridine(38/39/40) in tRNA. Functionally, formation of pseudouridine at positions 38, 39 and 40 in the anticodon stem and loop of transfer RNAs. This chain is tRNA pseudouridine synthase A, found in Roseobacter denitrificans (strain ATCC 33942 / OCh 114) (Erythrobacter sp. (strain OCh 114)).